The primary structure comprises 633 residues: ATP-dependent RNA helicase mss116, mitochondrial (633 aa).

The N-terminal 32 residues, 1–32 (MKTGRTRPLRVFDILVPPWPPTVPHRIKLPRG), are a transit peptide targeting the mitochondrion. The short motif at 38–66 (EFYSAITRNWNKLKGLKNCWQIWKDVQEI) is the Q motif element. One can recognise a Helicase ATP-binding domain in the interval 70–248 (IRKYQGESTV…TAEKLSNIQT (179 aa)). 83–90 (PGNNDGAH) is a binding site for ATP. The short motif at 195–198 (RPLE) is the DEAD box element. A Helicase C-terminal domain is found at 262-429 (FLADVKRILQ…NVDLVIQVGL (168 aa)). The tract at residues 567 to 633 (FNYATGNDLN…GGRGGKPRAA (67 aa)) is disordered.

It belongs to the DEAD box helicase family. DDX18/HAS1 subfamily.

It localises to the mitochondrion matrix. It catalyses the reaction ATP + H2O = ADP + phosphate + H(+). Its function is as follows. ATP-dependent RNA helicase required for mitochondrial splicing of group I and II introns. Also required for efficient mitochondrial translation. In Aspergillus oryzae (strain ATCC 42149 / RIB 40) (Yellow koji mold), this protein is ATP-dependent RNA helicase mss116, mitochondrial (mss116).